Consider the following 147-residue polypeptide: Hemoglobin subunit epsilon (147 aa).

The Globin domain occupies 3 to 147 (HFTAEEKAAI…VAIALGHKYH (145 aa)). Phosphoserine is present on residues Ser-14 and Ser-51. Positions 64 and 93 each coordinate heme b.

Belongs to the globin family. Heterotetramer of two alpha chains and two epsilon chains in early embryonic hemoglobin Gower-2; two zeta chains and two epsilon chains in early embryonic hemoglobin Gower-1. As to expression, red blood cells.

The epsilon chain is a beta-type chain of early mammalian embryonic hemoglobin. The sequence is that of Hemoglobin subunit epsilon (HBE1) from Leontopithecus rosalia (Golden lion tamarin).